Here is a 255-residue protein sequence, read N- to C-terminus: 1-(5-phosphoribosyl)-5-[(5-phosphoribosylamino)methylideneamino] imidazole-4-carboxamide isomerase (255 aa).

The active-site Proton acceptor is Asp-8. The Proton donor role is filled by Asp-129.

Belongs to the HisA/HisF family.

The protein resides in the cytoplasm. It catalyses the reaction 1-(5-phospho-beta-D-ribosyl)-5-[(5-phospho-beta-D-ribosylamino)methylideneamino]imidazole-4-carboxamide = 5-[(5-phospho-1-deoxy-D-ribulos-1-ylimino)methylamino]-1-(5-phospho-beta-D-ribosyl)imidazole-4-carboxamide. Its pathway is amino-acid biosynthesis; L-histidine biosynthesis; L-histidine from 5-phospho-alpha-D-ribose 1-diphosphate: step 4/9. The protein is 1-(5-phosphoribosyl)-5-[(5-phosphoribosylamino)methylideneamino] imidazole-4-carboxamide isomerase of Prochlorococcus marinus (strain AS9601).